Here is a 201-residue protein sequence, read N- to C-terminus: Large ribosomal subunit protein uL4 (201 aa).

The disordered stretch occupies residues 45-67 (AQKTRAEVTGSGKKPWRQKGTGR).

Belongs to the universal ribosomal protein uL4 family. In terms of assembly, part of the 50S ribosomal subunit.

One of the primary rRNA binding proteins, this protein initially binds near the 5'-end of the 23S rRNA. It is important during the early stages of 50S assembly. It makes multiple contacts with different domains of the 23S rRNA in the assembled 50S subunit and ribosome. Its function is as follows. Forms part of the polypeptide exit tunnel. The protein is Large ribosomal subunit protein uL4 of Yersinia enterocolitica serotype O:8 / biotype 1B (strain NCTC 13174 / 8081).